Consider the following 114-residue polypeptide: MRVKKGFKARRRRNRVLKLAKGFRGRRKNCYRRANQAVERALNYSTRDRRLKRREFRALWIVRINAAARQNGTTYSKLVAALRKAGVEIDRKILADLALALPGDFAAIVKTAQA.

This sequence belongs to the bacterial ribosomal protein bL20 family.

Functionally, binds directly to 23S ribosomal RNA and is necessary for the in vitro assembly process of the 50S ribosomal subunit. It is not involved in the protein synthesizing functions of that subunit. In Anaeromyxobacter dehalogenans (strain 2CP-C), this protein is Large ribosomal subunit protein bL20.